A 71-amino-acid polypeptide reads, in one-letter code: DNA-directed RNA polymerase subunit omega (71 aa).

Belongs to the RNA polymerase subunit omega family. The RNAP catalytic core consists of 2 alpha, 1 beta, 1 beta' and 1 omega subunit. When a sigma factor is associated with the core the holoenzyme is formed, which can initiate transcription.

The enzyme catalyses RNA(n) + a ribonucleoside 5'-triphosphate = RNA(n+1) + diphosphate. Functionally, promotes RNA polymerase assembly. Latches the N- and C-terminal regions of the beta' subunit thereby facilitating its interaction with the beta and alpha subunits. The polypeptide is DNA-directed RNA polymerase subunit omega (Azoarcus sp. (strain BH72)).